Here is a 70-residue protein sequence, read N- to C-terminus: UPF0352 protein PBPRA2586 (70 aa).

The protein belongs to the UPF0352 family.

This chain is UPF0352 protein PBPRA2586, found in Photobacterium profundum (strain SS9).